The primary structure comprises 433 residues: Gamma-glutamyl phosphate reductase (433 aa).

The protein belongs to the gamma-glutamyl phosphate reductase family.

The protein localises to the cytoplasm. It carries out the reaction L-glutamate 5-semialdehyde + phosphate + NADP(+) = L-glutamyl 5-phosphate + NADPH + H(+). Its pathway is amino-acid biosynthesis; L-proline biosynthesis; L-glutamate 5-semialdehyde from L-glutamate: step 2/2. Its function is as follows. Catalyzes the NADPH-dependent reduction of L-glutamate 5-phosphate into L-glutamate 5-semialdehyde and phosphate. The product spontaneously undergoes cyclization to form 1-pyrroline-5-carboxylate. This is Gamma-glutamyl phosphate reductase from Psychrobacter cryohalolentis (strain ATCC BAA-1226 / DSM 17306 / VKM B-2378 / K5).